Here is a 46-residue protein sequence, read N- to C-terminus: MTEQKPKPSCHNVMVGNYVPTASDRAANRTLGFGLVTNIINGGLDC.

It belongs to the glycosyl hydrolase 19 family. Chitinase class I subfamily.

It catalyses the reaction Random endo-hydrolysis of N-acetyl-beta-D-glucosaminide (1-&gt;4)-beta-linkages in chitin and chitodextrins.. In terms of biological role, defense against chitin-containing fungal and bacterial pathogens. This is Endochitinase 2 from Arachis hypogaea (Peanut).